A 121-amino-acid polypeptide reads, in one-letter code: uncharacterized protein (121 aa).

3 helical membrane-spanning segments follow: residues 12–32 (MIGI…HPGV), 35–55 (VIQP…FGGL), and 67–87 (VFVV…YVGD).

This sequence belongs to the sbp family.

The protein localises to the cell membrane. This is an uncharacterized protein from Mycobacterium bovis (strain ATCC BAA-935 / AF2122/97).